The following is a 422-amino-acid chain: Tryptophan synthase beta chain 1 (422 aa).

N6-(pyridoxal phosphate)lysine is present on Lys-107.

Belongs to the TrpB family. As to quaternary structure, tetramer of two alpha and two beta chains. The cofactor is pyridoxal 5'-phosphate.

It catalyses the reaction (1S,2R)-1-C-(indol-3-yl)glycerol 3-phosphate + L-serine = D-glyceraldehyde 3-phosphate + L-tryptophan + H2O. It functions in the pathway amino-acid biosynthesis; L-tryptophan biosynthesis; L-tryptophan from chorismate: step 5/5. The beta subunit is responsible for the synthesis of L-tryptophan from indole and L-serine. This is Tryptophan synthase beta chain 1 (trpB1) from Sulfurisphaera tokodaii (strain DSM 16993 / JCM 10545 / NBRC 100140 / 7) (Sulfolobus tokodaii).